The primary structure comprises 413 residues: MQNHHHQQSSYGGGYPGQAYREQHPPPNPYGYGQPSPQPGYGAPPPHNGYGQPPSGYGQPPPPTGNAVYGGRQPGMNQYQNTYSHGHQGGPPPPPTDPVAFGHGAPQGYSFQYSRCTGKRKALLIGINYFGQKGQLRGCINDVKNMSTYLNQNFGYAREDMVLLTDDQQNPMSQPTKANILRAMHWLVKDAQPNDSLFFHYSGHGGQTPDLDGDEEDGYDEVIYPVDFRQAGHIVDDEMHRIMVRPLRPGVRLTAIFDSCHSGSALDLPYIYSTQGILKEPNLAKEAGQGLLGVVSAYARGDMSGMVSTAVGFLKRATKGDEAYTRSKQTKTSPADVIMWSGSKDSQTSQDAQIGGQATGAMSWAFITALRKNPQQSYVQLLNSIRDELATKYSQKPQLSCSHPLDTNLLYVM.

The tract at residues 1-104 (MQNHHHQQSS…PTDPVAFGHG (104 aa)) is disordered. Over residues 36–47 (SPQPGYGAPPPH) the composition is skewed to pro residues. Positions 49–58 (GYGQPPSGYG) are enriched in low complexity. The span at 75–85 (GMNQYQNTYSH) shows a compositional bias: polar residues. Active-site residues include histidine 204 and cysteine 260.

Belongs to the peptidase C14B family.

Involved in cell death (apoptosis). Required for the apoptotic-like loss of membrane phospholipid asymmetry at stationary phase and facilitates growth under conditions of endoplasmic reticulum stress. This Aspergillus fumigatus (strain CBS 144.89 / FGSC A1163 / CEA10) (Neosartorya fumigata) protein is Metacaspase-1A (casA).